The following is a 140-amino-acid chain: Sex-regulated protein janus-B (140 aa).

Arg-42 serves as a coordination point for substrate. The Proton acceptor role is filled by His-69. 110-112 (SRT) serves as a coordination point for substrate.

Belongs to the janus family.

Its function is as follows. JanA and janB regulate somatic sex differentiation. This chain is Sex-regulated protein janus-B (janB), found in Drosophila yakuba (Fruit fly).